Reading from the N-terminus, the 245-residue chain is 2-C-methyl-D-erythritol 4-phosphate cytidylyltransferase (245 aa).

The protein belongs to the IspD/TarI cytidylyltransferase family. IspD subfamily.

It catalyses the reaction 2-C-methyl-D-erythritol 4-phosphate + CTP + H(+) = 4-CDP-2-C-methyl-D-erythritol + diphosphate. It participates in isoprenoid biosynthesis; isopentenyl diphosphate biosynthesis via DXP pathway; isopentenyl diphosphate from 1-deoxy-D-xylulose 5-phosphate: step 2/6. In terms of biological role, catalyzes the formation of 4-diphosphocytidyl-2-C-methyl-D-erythritol from CTP and 2-C-methyl-D-erythritol 4-phosphate (MEP). This chain is 2-C-methyl-D-erythritol 4-phosphate cytidylyltransferase, found in Chloroherpeton thalassium (strain ATCC 35110 / GB-78).